A 745-amino-acid polypeptide reads, in one-letter code: MQRDYLIRVETESMPDFKRLNGLMIGFVIKGEAHIYDENNMTQCNSGDIFIINHRDLYRFQLQQDGIICYIQFQMKYLADKFDDAHCLYFHLTDATTTKNIHQLRNIMARLVSTHIRHNELSKLTEQQLVIQLLMHMIHYVPRTYHSNQSILNDDKVNQVCDYIELHFHEDLSLSELSEYVGWSESHLSKKFTESLGVGFQHFLNTTRIEHAKLDLTYTDETITDIALQNGFSSAASFARTFKHFTHQTPKQYRGDRPAITENQQSAQHNYHDRELILLLNDYIEEMNHFIEDIEKMNYKEIAFKPTNQQLNQFNHIIQVGYLRNLLNTQYQSQLLTCHHDFQVNEVLAYDVMPYIMKKLNAPFTYDAEISNIFYDIDLCLDFLLDHNFSLTMHLNQYDSRDYIDAFKVFIHHVALHVSHRKDLKFNLYVTTLHNALIEMIDYFKALFPNGGLYIHLDQATERHLPLLKRLEPHIDHFVFDANSNDAVDFNKMNDDEFKTASQMIINKTNYFIDLIHRHNLKRPLILLNWNTLTGDTFITNGEYFRGGIIIEQLLKLSSKVEGIGYWLNYDLHVSHCKNERDYMNSIELFHQYNGKRPVYFTALLFNKLTSNILYSDDTCIVTGTDSNFQILLYDAKHFNPYLALDNQMNMRATEMIHLNINALEEGMYKIKHFTLDKENGALFNLWRKHHTIHGMDKDSIDYVNRMSFPKLEVYDIDITDTLALNIKMITNGIHLIEVKRYPSS.

In terms of domain architecture, HTH araC/xylS-type spans 158–256; it reads NQVCDYIELH…HQTPKQYRGD (99 aa). DNA-binding regions (H-T-H motif) lie at residues 175–196 and 223–246; these read SELS…TESL and ITDI…KHFT.

This is an uncharacterized protein from Staphylococcus aureus (strain MW2).